The primary structure comprises 217 residues: Nucleoside diphosphate-linked moiety X motif 6 (217 aa).

The Nudix hydrolase domain maps to 42 to 177; that stretch reads THQVGVAGAV…VAKLLLYGYN (136 aa). The Nudix box signature appears at 77–98; the sequence is GLSDQGEDIGATAVREVLEETG.

It belongs to the Nudix hydrolase family. In terms of tissue distribution, detected in liver (at protein level).

It is found in the cytoplasm. It localises to the nucleus. Its subcellular location is the mitochondrion. May contribute to the regulation of cell proliferation. The chain is Nucleoside diphosphate-linked moiety X motif 6 (nudt6) from Xenopus laevis (African clawed frog).